The chain runs to 565 residues: Bifunctional dihydrofolate reductase-thymidylate synthase 2 (565 aa).

Positions 65–242 constitute a DHFR domain; the sequence is TYQVVVAATK…LRFSFTTHVR (178 aa). V69 provides a ligand contact to substrate. Residues A71 and 77 to 83 contribute to the NADP(+) site; that span reads GIGKDGK. Substrate is bound at residue D91. NADP(+) contacts are provided by residues 115-117 and 136-139; these read RKT and LSRS. I178 contributes to the substrate binding site. 179–186 lines the NADP(+) pocket; sequence GGGDILRE. T199 is a binding site for substrate. Positions 245–280 are hinge; that stretch reads SSSAGEASDESDGSKVLQVDWKKFSSVLPKMIFDRH. A thymidylate synthase region spans residues 281 to 565; the sequence is EEYLYLNLVK…HKKIDMKMAV (285 aa). R302 contacts dUMP. C447 is a catalytic residue. DUMP contacts are provided by residues H448, 466 to 470, N478, and 508 to 510; these read QRSAD and HVY.

It in the N-terminal section; belongs to the dihydrofolate reductase family. The protein in the C-terminal section; belongs to the thymidylate synthase family. Heterodimer or homodimer.

It catalyses the reaction (6S)-5,6,7,8-tetrahydrofolate + NADP(+) = 7,8-dihydrofolate + NADPH + H(+). The enzyme catalyses dUMP + (6R)-5,10-methylene-5,6,7,8-tetrahydrofolate = 7,8-dihydrofolate + dTMP. Its pathway is cofactor biosynthesis; tetrahydrofolate biosynthesis; 5,6,7,8-tetrahydrofolate from 7,8-dihydrofolate: step 1/1. Functionally, bifunctional enzyme. Involved in de novo dTMP biosynthesis. Key enzyme in folate metabolism. Can play two different roles depending on the source of dihydrofolate: de novo synthesis of tetrahydrofolate or recycling of the dihydrofolate released as one of the end products of the TS catalyzed reaction. Catalyzes an essential reaction for de novo glycine and purine synthesis, DNA precursor synthesis, and for the conversion of dUMP to dTMP. This is Bifunctional dihydrofolate reductase-thymidylate synthase 2 (THY-2) from Arabidopsis thaliana (Mouse-ear cress).